The sequence spans 1120 residues: TBC1 domain family member 8B (1120 aa).

GRAM domains lie at 145-212 (LKFE…EKTS) and 285-353 (EQFN…DKTN). The region spanning 487-674 (GIPETLRGEL…NVVDCFFYDG (188 aa)) is the Rab-GAP TBC domain. In terms of domain architecture, EF-hand spans 858-893 (NKDSLALWTFRLLDENSDCLINFKEFSSAIDIMYNG). Residues 1035 to 1066 (SPTSSAKGFSGTVCGSGGPSEEKTGSHLEKDP) are disordered. Basic and acidic residues predominate over residues 1054-1066 (SEEKTGSHLEKDP).

As to quaternary structure, interacts (via domain Rab-GAP TBC) with RAB11B (in GTP-bound form). Kidney (at protein level).

The protein resides in the cytoplasm. Its subcellular location is the cytosol. Functionally, involved in vesicular recycling, probably as a RAB11B GTPase-activating protein. This Homo sapiens (Human) protein is TBC1 domain family member 8B (TBC1D8B).